We begin with the raw amino-acid sequence, 388 residues long: Succinate--CoA ligase [ADP-forming] subunit beta (388 aa).

The ATP-grasp domain occupies 9–245 (KELLASYGLP…KSQENERELK (237 aa)). Residues Lys-46, 53–55 (GRG), Glu-100, Tyr-103, and Glu-108 contribute to the ATP site. Residues Asn-200 and Asp-214 each contribute to the Mg(2+) site. Substrate-binding positions include Asn-265 and 322–324 (GIV).

The protein belongs to the succinate/malate CoA ligase beta subunit family. In terms of assembly, heterotetramer of two alpha and two beta subunits. Requires Mg(2+) as cofactor.

The enzyme catalyses succinate + ATP + CoA = succinyl-CoA + ADP + phosphate. It carries out the reaction GTP + succinate + CoA = succinyl-CoA + GDP + phosphate. The protein operates within carbohydrate metabolism; tricarboxylic acid cycle; succinate from succinyl-CoA (ligase route): step 1/1. In terms of biological role, succinyl-CoA synthetase functions in the citric acid cycle (TCA), coupling the hydrolysis of succinyl-CoA to the synthesis of either ATP or GTP and thus represents the only step of substrate-level phosphorylation in the TCA. The beta subunit provides nucleotide specificity of the enzyme and binds the substrate succinate, while the binding sites for coenzyme A and phosphate are found in the alpha subunit. The polypeptide is Succinate--CoA ligase [ADP-forming] subunit beta (Neisseria gonorrhoeae (strain ATCC 700825 / FA 1090)).